Here is a 514-residue protein sequence, read N- to C-terminus: MVLDLDLFRVDKGGDPALIRETQEKRFKDPGLVDQLVKADSEWRRCRFRADNLNKLKNLCSKTIGEKMKKKEPVGDDESVPENVLSFDDLTADALANLKVSQIKKVRLLIDEAILKCDAERIKLEAERFENLREIGNLLHPSVPISNDEDVDNKVERIWGDCTVRKKYSHVDLVVMVDGFEGEKGAVVAGSRGYFLKGVLVFLEQALIQYALRTLGSRGYIPIYTPFFMRKEVMQEVAQLSQFDEELYKVIGKGSEKSDDNSYDEKYLIATSEQPIAALHRDEWLRPEDLPIKYAGLSTCFRQEVGSHGRDTRGIFRVHQFEKIEQFVYSSPHDNKSWEMFEEMITTAEEFYQSLGIPYHIVNIVSGSLNHAASKKLDLEAWFPGSGAFRELVSCSNCTDYQARRLRIRYGQTKKMMDKVEFVHMLNATMCATTRTICAILENYQTEKGITVPEKLKEFMPPGLQELIPFVKPAPIEQEPSKKQKKQHEGSKKKAAARDVTLENRLQNMEVTDA.

Met-1 is modified (N-acetylmethionine). The tract at residues 9–61 is interaction with tRNA; it reads RVDKGGDPALIRETQEKRFKDPGLVDQLVKADSEWRRCRFRADNLNKLKNLCS. Residue Ser-241 is modified to Phosphoserine. 2 residues coordinate L-serine: Thr-271 and Arg-302. ATP is bound by residues 302–304 and 318–321; these read RQE and VHQF. Residue Lys-323 is modified to N6-acetyllysine. Glu-325 contacts L-serine. 391–394 is a binding site for ATP; the sequence is ELVS. Asn-427 is a binding site for L-serine. Residues 473–514 form a disordered region; sequence PAPIEQEPSKKQKKQHEGSKKKAAARDVTLENRLQNMEVTDA. Over residues 479–502 the composition is skewed to basic and acidic residues; it reads EPSKKQKKQHEGSKKKAAARDVTL. The Nuclear localization signal signature appears at 482 to 494; sequence KKQKKQHEGSKKK. The span at 504 to 514 shows a compositional bias: polar residues; sequence NRLQNMEVTDA.

This sequence belongs to the class-II aminoacyl-tRNA synthetase family. Type-1 seryl-tRNA synthetase subfamily. In terms of assembly, homodimer. The tRNA molecule may bind across the dimer. Interacts with SIRT2. Interacts with METTL6; interaction is required for the tRNA N(3)-methylcytidine methyltransferase activity of METTL6. As to expression, brain.

It is found in the cytoplasm. Its subcellular location is the nucleus. The catalysed reaction is tRNA(Ser) + L-serine + ATP = L-seryl-tRNA(Ser) + AMP + diphosphate + H(+). It carries out the reaction tRNA(Sec) + L-serine + ATP = L-seryl-tRNA(Sec) + AMP + diphosphate + H(+). Its pathway is aminoacyl-tRNA biosynthesis; selenocysteinyl-tRNA(Sec) biosynthesis; L-seryl-tRNA(Sec) from L-serine and tRNA(Sec): step 1/1. In terms of biological role, catalyzes the attachment of serine to tRNA(Ser) in a two-step reaction: serine is first activated by ATP to form Ser-AMP and then transferred to the acceptor end of tRNA(Ser). Is probably also able to aminoacylate tRNA(Sec) with serine, to form the misacylated tRNA L-seryl-tRNA(Sec), which will be further converted into selenocysteinyl-tRNA(Sec). In the nucleus, binds to the VEGFA core promoter and prevents MYC binding and transcriptional activation by MYC. Recruits SIRT2 to the VEGFA promoter, promoting deacetylation of histone H4 at 'Lys-16' (H4K16). Thereby, inhibits the production of VEGFA and sprouting angiogenesis mediated by VEGFA. The chain is Serine--tRNA ligase, cytoplasmic from Homo sapiens (Human).